The chain runs to 321 residues: Ribose-phosphate pyrophosphokinase C (321 aa).

Mg(2+)-binding residues include Asp132 and Asp147. The segment at Ser214–Glu229 is binding of phosphoribosylpyrophosphate.

It belongs to the ribose-phosphate pyrophosphokinase family. Mg(2+) is required as a cofactor.

Its subcellular location is the cytoplasm. It catalyses the reaction D-ribose 5-phosphate + ATP = 5-phospho-alpha-D-ribose 1-diphosphate + AMP + H(+). It functions in the pathway metabolic intermediate biosynthesis; 5-phospho-alpha-D-ribose 1-diphosphate biosynthesis; 5-phospho-alpha-D-ribose 1-diphosphate from D-ribose 5-phosphate (route I): step 1/1. The sequence is that of Ribose-phosphate pyrophosphokinase C (prsC) from Dictyostelium discoideum (Social amoeba).